A 402-amino-acid polypeptide reads, in one-letter code: MAFSQAVSGLNAAATNLDVIGNNIANSATYGFKSGTASFADMFAGSKVGLGVKVAGITQDFTDGTTTNTGRGLDVAISQNGFFRLVDSNGSVFYSRNGQFKLDENRNLVNMQGLQLTGYPATGTPPTIQQGANPTNISIPNTLMAAKTTTTASMQINLNSSDPLPTVTPFSASNADSYNKKGSVTVFDSQGNAHDMSVYFVKTGDNNWQVYTQDSSDPNSIAKTATTLEFNANGTLVDGAMANNIATGAINGAEPATFSLSFLNSMQQNTGANNIVATTQNGYKPGDLVSYQINDDGTVVGNYSNEQTQLLGQIVLANFANNEGLASEGDNVWSATQSSGVALLGTAGTGNFGTLTNGALEASNVDLSKELVNMIVAQRNYQSNAQTIKTQDQILNTLVNLR.

Belongs to the flagella basal body rod proteins family.

The protein resides in the bacterial flagellum basal body. In Escherichia coli (strain K12), this protein is Flagellar hook protein FlgE (flgE).